A 255-amino-acid chain; its full sequence is Thrombin-like enzyme batroxobin (255 aa).

Residues 1 to 18 (MVLIRVIANLLILQVSYA) form the signal peptide. Positions 19–24 (QKSSEL) are excised as a propeptide. The Peptidase S1 domain maps to 25 to 247 (VIGGDECDIN…YLPWIQSIIA (223 aa)). 6 cysteine pairs are disulfide-bonded: Cys31-Cys163, Cys50-Cys66, Cys98-Cys254, Cys142-Cys208, Cys174-Cys187, and Cys198-Cys223. Active-site charge relay system residues include His65 and Asp110. Asn170 carries N-linked (GlcNAc...) asparagine glycosylation. Residue Ser202 is the Charge relay system of the active site. The N-linked (GlcNAc...) asparagine glycan is linked to Asn249.

Belongs to the peptidase S1 family. Snake venom subfamily. As to quaternary structure, monomer. Expressed by the venom gland.

It is found in the secreted. It carries out the reaction Selective cleavage of Arg-|-Xaa bond in fibrinogen, to form fibrin, and release fibrinopeptide A. The specificity of further degradation of fibrinogen varies with species origin of the enzyme.. Its function is as follows. Thrombin-like snake venom serine protease. Cleaves Arg-Gly bonds in fibrinogen alpha chains (FGA). This Bothrops atrox (Barba amarilla) protein is Thrombin-like enzyme batroxobin.